The primary structure comprises 340 residues: DNA-directed RNA polymerase subunit alpha (340 aa).

The tract at residues 1–236 (MLSLSKNWNT…EQLQLFISFE (236 aa)) is alpha N-terminal domain (alpha-NTD). Residues 251–340 (FAPYLLKRVD…LSKRYEDSYN (90 aa)) are alpha C-terminal domain (alpha-CTD).

The protein belongs to the RNA polymerase alpha chain family. Homodimer. The RNAP catalytic core consists of 2 alpha, 1 beta, 1 beta' and 1 omega subunit. When a sigma factor is associated with the core the holoenzyme is formed, which can initiate transcription.

The catalysed reaction is RNA(n) + a ribonucleoside 5'-triphosphate = RNA(n+1) + diphosphate. DNA-dependent RNA polymerase catalyzes the transcription of DNA into RNA using the four ribonucleoside triphosphates as substrates. This Rickettsia peacockii (strain Rustic) protein is DNA-directed RNA polymerase subunit alpha.